Reading from the N-terminus, the 206-residue chain is Pyrrolidone-carboxylate peptidase 2 (206 aa).

Catalysis depends on residues Glu-78, Cys-141, and His-165.

The protein belongs to the peptidase C15 family. In terms of assembly, homotetramer.

It localises to the cytoplasm. The catalysed reaction is Release of an N-terminal pyroglutamyl group from a polypeptide, the second amino acid generally not being Pro.. Removes 5-oxoproline from various penultimate amino acid residues except L-proline. This chain is Pyrrolidone-carboxylate peptidase 2, found in Caldanaerobacter subterraneus subsp. tengcongensis (strain DSM 15242 / JCM 11007 / NBRC 100824 / MB4) (Thermoanaerobacter tengcongensis).